The primary structure comprises 889 residues: MEAALADGEPDRSSLLGDSKDVLGPSTVVANSDEPQHLTPGKMSQRQGRDANPTPTRDLPQPSLSPASLHSQGFERGKEDISQNKDDSSLSMSKSKSESKLYNGSEKDSSTSSKLTKKESLKVQKKNYREEKKRATKELLSTITDPSVIVMADWLKIRGTLKSWTKLWCVLKPGVLLIYKTQKNGQWVGTVLLNACEIIERPSKKDGFCFKLFHPLEQSIWAVKGPKGEAVGSITQPLPSSYLIIRATSESDGRCWMDALELALKCSSLLKRTMVREGKEHDLSISSDSTHVTLYGLLRANNLHSGDNFQLNDSEIERQHFKDQDLYSDKSDKENDPEHDESDNEVLGKSEESDTDTSERQDDSYIDPEPVEPLKETTYMEQSHEELGEAGEASQTETVSEENKSLIWTLLKQVRPGMDLSRVVLPTFILEPRSFLDKLSDYYYHADFLSEAALEENPYFRLKKVVKWYLSGFYKKPKGLKKPYNPILGETFRCLWIHPRTNSKTFYIAEQVSHHPPISAFYVSNRKDGFCLSGSILAKSKFYGNSLSAILEGEARLTFLNRGEDYVMTMPYAHCKGILYGTMTLELGGTVNITCQKTGYSAILEFKLKPFLGSSDYVNQISGKLKLGKEVLATLEGHWDSEVFINDKKTDNSEIFWNPTPDIKQWRLIRHTVKFEEQDDFESEKLWQRVTKAINAKDQTEATQEKYVLEEAQRQAARDRKTKTQEWVCKLFELDPLTGEWHYKFSDTRPWDPLNDMIQFEKDGVIQTKVKHRTPMVSVPKMKHKPTRQQKKVVKGYSSPEPDIQDSSGSEAQSVKPSTRRKKGIDLGDIQSSIESIKQTQEEIKRNIMALRNHLLSSTPATDYFLQQKDYFVIFLLILLQVIINFIFK.

N-acetylmethionine is present on M1. Residues 1–129 (MEAALADGEP…SLKVQKKNYR (129 aa)) form a disordered region. S14, S65, and S68 each carry phosphoserine. A compositionally biased stretch (polar residues) spans 62 to 71 (PSLSPASLHS). 3 stretches are compositionally biased toward basic and acidic residues: residues 73–88 (GFER…KDDS), 95–109 (SKSE…EKDS), and 116–129 (TKKE…KNYR). One can recognise a PH domain in the interval 148-265 (VIVMADWLKI…WMDALELALK (118 aa)). Phosphoserine occurs at positions 314, 328, and 342. The segment covering 321-336 (FKDQDLYSDKSDKEND) has biased composition (basic and acidic residues). Residues 321-374 (FKDQDLYSDKSDKENDPEHDESDNEVLGKSEESDTDTSERQDDSYIDPEPVEPL) are disordered. Over residues 346 to 363 (VLGKSEESDTDTSERQDD) the composition is skewed to basic and acidic residues. A 1,2-diacyl-sn-glycero-3-phospho-(1D-myo-inositol 4-phosphate) contacts are provided by residues 420-425 (LSRVVL), 482-485 (KPYN), and 514-515 (HH). A 1,2-diacyl-sn-glycero-3-phospho-L-serine contacts are provided by residues 420-425 (LSRVVL) and N485. Position 540 (S540) interacts with a 1,2-diacyl-sn-glycero-3-phospho-L-serine. Residues K706, E710, and R714 each coordinate a 1,2-diacyl-sn-glycero-3-phospho-(1D-myo-inositol 4-phosphate). The interval 772-823 (HRTPMVSVPKMKHKPTRQQKKVVKGYSSPEPDIQDSSGSEAQSVKPSTRRKK) is disordered. Over residues 781 to 794 (KMKHKPTRQQKKVV) the composition is skewed to basic residues. The segment covering 805–817 (QDSSGSEAQSVKP) has biased composition (polar residues). Residues S807, S808, S810, and S814 each carry the phosphoserine modification. The chain crosses the membrane as a helical span at residues 871–888 (YFVIFLLILLQVIINFIF).

Belongs to the OSBP family. In terms of assembly, interacts with SPAG5. Interacts with NUP62. As to expression, widely expressed. Most abundant in liver, spleen, kidney, brain and adipose tissue.

The protein localises to the endoplasmic reticulum membrane. The protein resides in the nucleus membrane. In terms of biological role, lipid transporter involved in lipid countertransport between the endoplasmic reticulum and the plasma membrane: specifically exchanges phosphatidylserine with phosphatidylinositol 4-phosphate (PI4P), delivering phosphatidylserine to the plasma membrane in exchange for PI4P, which is degraded by the SAC1/SACM1L phosphatase in the endoplasmic reticulum. Binds phosphatidylserine and PI4P in a mutually exclusive manner. Binds oxysterol, 25-hydroxycholesterol and cholesterol. The chain is Oxysterol-binding protein-related protein 8 from Mus musculus (Mouse).